The primary structure comprises 291 residues: Formamidopyrimidine-DNA glycosylase (291 aa).

Residue P2 is the Schiff-base intermediate with DNA of the active site. Catalysis depends on E3, which acts as the Proton donor. K58 functions as the Proton donor; for beta-elimination activity in the catalytic mechanism. The DNA site is built by H100, R123, and K166. The segment at 257–291 (SVYGREGKECLQCGTPIIRILQSGRSSFYCSQCQK) adopts an FPG-type zinc-finger fold. R281 functions as the Proton donor; for delta-elimination activity in the catalytic mechanism.

Belongs to the FPG family. As to quaternary structure, monomer. The cofactor is Zn(2+).

The catalysed reaction is Hydrolysis of DNA containing ring-opened 7-methylguanine residues, releasing 2,6-diamino-4-hydroxy-5-(N-methyl)formamidopyrimidine.. The enzyme catalyses 2'-deoxyribonucleotide-(2'-deoxyribose 5'-phosphate)-2'-deoxyribonucleotide-DNA = a 3'-end 2'-deoxyribonucleotide-(2,3-dehydro-2,3-deoxyribose 5'-phosphate)-DNA + a 5'-end 5'-phospho-2'-deoxyribonucleoside-DNA + H(+). Involved in base excision repair of DNA damaged by oxidation or by mutagenic agents. Acts as a DNA glycosylase that recognizes and removes damaged bases. Has a preference for oxidized purines, such as 7,8-dihydro-8-oxoguanine (8-oxoG). Has AP (apurinic/apyrimidinic) lyase activity and introduces nicks in the DNA strand. Cleaves the DNA backbone by beta-delta elimination to generate a single-strand break at the site of the removed base with both 3'- and 5'-phosphates. The chain is Formamidopyrimidine-DNA glycosylase from Bartonella tribocorum (strain CIP 105476 / IBS 506).